Consider the following 380-residue polypeptide: 3-isopropylmalate dehydratase large subunit 2 (380 aa).

Residues Cys-262, Cys-320, and Cys-323 each coordinate [4Fe-4S] cluster.

This sequence belongs to the aconitase/IPM isomerase family. LeuC type 2 subfamily. In terms of assembly, heterodimer of LeuC and LeuD. [4Fe-4S] cluster is required as a cofactor.

The catalysed reaction is (2R,3S)-3-isopropylmalate = (2S)-2-isopropylmalate. The protein operates within amino-acid biosynthesis; L-leucine biosynthesis; L-leucine from 3-methyl-2-oxobutanoate: step 2/4. Its function is as follows. Catalyzes the isomerization between 2-isopropylmalate and 3-isopropylmalate, via the formation of 2-isopropylmaleate. The polypeptide is 3-isopropylmalate dehydratase large subunit 2 (Pyrococcus furiosus (strain ATCC 43587 / DSM 3638 / JCM 8422 / Vc1)).